The primary structure comprises 974 residues: Phosphoenolpyruvate carboxylase 1 (974 aa).

Residues H164 and K604 contribute to the active site.

This sequence belongs to the PEPCase type 1 family. Exists as a homotetramer or heterooligomer. Requires Mg(2+) as cofactor.

The protein localises to the cytoplasm. It carries out the reaction oxaloacetate + phosphate = phosphoenolpyruvate + hydrogencarbonate. Its activity is regulated as follows. Activated by glutamine and dihydroxyacetone phosphate. Inhibited by glutamate, aspartate, 2-oxoglutarate and malate. Its function is as follows. Through the carboxylation of phosphoenolpyruvate (PEP) it forms oxaloacetate, a four-carbon dicarboxylic acid source for the tricarboxylic acid cycle. This Chlamydomonas reinhardtii (Chlamydomonas smithii) protein is Phosphoenolpyruvate carboxylase 1.